Reading from the N-terminus, the 560-residue chain is Calcium-binding and coiled-coil domain-containing protein 1-A (560 aa).

Coiled-coil stretches lie at residues 156-192 (KATF…EKRI) and 367-480 (WWQE…DKML). Positions 480 to 517 (LMEDKTDSSPPTLSVDLSDSDDESPGDEGVSQQLGPCS) are disordered. The segment covering 487–496 (SSPPTLSVDL) has biased composition (low complexity).

This sequence belongs to the CALCOCO family.

The protein localises to the cytoplasm. It localises to the nucleus. Functionally, may function as a coactivator for aryl hydrocarbon and nuclear receptors. In Xenopus laevis (African clawed frog), this protein is Calcium-binding and coiled-coil domain-containing protein 1-A (calcoco1-a).